We begin with the raw amino-acid sequence, 194 residues long: Peptidyl-tRNA hydrolase (194 aa).

Residue Tyr16 participates in tRNA binding. Residue His21 is the Proton acceptor of the active site. TRNA contacts are provided by Phe67, Asn69, and Asn115.

Belongs to the PTH family. Monomer.

Its subcellular location is the cytoplasm. The catalysed reaction is an N-acyl-L-alpha-aminoacyl-tRNA + H2O = an N-acyl-L-amino acid + a tRNA + H(+). In terms of biological role, hydrolyzes ribosome-free peptidyl-tRNAs (with 1 or more amino acids incorporated), which drop off the ribosome during protein synthesis, or as a result of ribosome stalling. Its function is as follows. Catalyzes the release of premature peptidyl moieties from peptidyl-tRNA molecules trapped in stalled 50S ribosomal subunits, and thus maintains levels of free tRNAs and 50S ribosomes. The chain is Peptidyl-tRNA hydrolase from Shigella dysenteriae serotype 1 (strain Sd197).